We begin with the raw amino-acid sequence, 218 residues long: Peroxiredoxin-like 2A (218 aa).

The segment at 3–101 is thioredoxin-like fold; that stretch reads MWSIGVGAVG…DELGVPLYAV (99 aa). Catalysis depends on redox-active residues Cys-74 and Cys-77.

The protein belongs to the peroxiredoxin-like PRXL2 family. PRXL2A subfamily. In terms of tissue distribution, expressed in kidney, liver, skin, and brain. Widely expressed with highest levels detected in adipose tissue.

It localises to the cytoplasm. Its subcellular location is the secreted. Involved in redox regulation of the cell. Acts as an antioxidant. Inhibits TNFSF11-induced NFKB1 and JUN activation and osteoclast differentiation. May affect bone resorption and help to maintain bone mass. Acts as a negative regulator of macrophage-mediated inflammation by inhibiting macrophage production of inflammatory cytokines, probably through suppression of the MAPK signaling pathway. This chain is Peroxiredoxin-like 2A (Prxl2a), found in Mus musculus (Mouse).